The sequence spans 1073 residues: Probable inorganic carbon transporter subunit DabA 2 (1073 aa).

Over residues 1 to 20 (MSSGNTSSQNHSPVNNQPTR) the composition is skewed to polar residues. The disordered stretch occupies residues 1-35 (MSSGNTSSQNHSPVNNQPTRLKSPLPALHKDTQPN). 4 residues coordinate Zn(2+): Cys535, Asp537, His721, and Cys736.

This sequence belongs to the inorganic carbon transporter (TC 9.A.2) DabA family. As to quaternary structure, forms a complex with DabB. Zn(2+) serves as cofactor.

Its subcellular location is the cell inner membrane. Part of an energy-coupled inorganic carbon pump. This is Probable inorganic carbon transporter subunit DabA 2 from Rhodopirellula baltica (strain DSM 10527 / NCIMB 13988 / SH1).